The sequence spans 153 residues: MLAFNFFGATEGGLFDINATLPLMAIQVVALTYILNSLFFKPVGNVVEKREKFVSNNIIEAKNKLSEVKKLEAELLTQLQSARTEAQRIVGEAENESDKLYKEALELANNEANASKEKARLEIESQTSAARDQLSKQADDLSELIVNRLILEK.

Residues 23–40 (LMAIQVVALTYILNSLFF) form a helical membrane-spanning segment.

Belongs to the ATPase B chain family. As to quaternary structure, F-type ATPases have 2 components, F(1) - the catalytic core - and F(0) - the membrane proton channel. F(1) has five subunits: alpha(3), beta(3), gamma(1), delta(1), epsilon(1). F(0) has four main subunits: a(1), b(1), b'(1) and c(10-14). The alpha and beta chains form an alternating ring which encloses part of the gamma chain. F(1) is attached to F(0) by a central stalk formed by the gamma and epsilon chains, while a peripheral stalk is formed by the delta, b and b' chains.

The protein resides in the cellular thylakoid membrane. In terms of biological role, f(1)F(0) ATP synthase produces ATP from ADP in the presence of a proton or sodium gradient. F-type ATPases consist of two structural domains, F(1) containing the extramembraneous catalytic core and F(0) containing the membrane proton channel, linked together by a central stalk and a peripheral stalk. During catalysis, ATP synthesis in the catalytic domain of F(1) is coupled via a rotary mechanism of the central stalk subunits to proton translocation. Component of the F(0) channel, it forms part of the peripheral stalk, linking F(1) to F(0). The b'-subunit is a diverged and duplicated form of b found in plants and photosynthetic bacteria. This is ATP synthase subunit b' from Prochlorococcus marinus (strain MIT 9312).